The sequence spans 92 residues: DNA-directed RNA polymerase subunit omega (92 aa).

The protein belongs to the RNA polymerase subunit omega family. As to quaternary structure, the RNAP catalytic core consists of 2 alpha, 1 beta, 1 beta' and 1 omega subunit. When a sigma factor is associated with the core the holoenzyme is formed, which can initiate transcription.

It catalyses the reaction RNA(n) + a ribonucleoside 5'-triphosphate = RNA(n+1) + diphosphate. Its function is as follows. Promotes RNA polymerase assembly. Latches the N- and C-terminal regions of the beta' subunit thereby facilitating its interaction with the beta and alpha subunits. The polypeptide is DNA-directed RNA polymerase subunit omega (Shewanella sp. (strain ANA-3)).